We begin with the raw amino-acid sequence, 427 residues long: Enolase (427 aa).

Glutamine 163 is a (2R)-2-phosphoglycerate binding site. Residue glutamate 205 is the Proton donor of the active site. Aspartate 242, glutamate 285, and aspartate 312 together coordinate Mg(2+). (2R)-2-phosphoglycerate-binding residues include lysine 337, arginine 366, serine 367, and lysine 388. Lysine 337 functions as the Proton acceptor in the catalytic mechanism.

This sequence belongs to the enolase family. Mg(2+) serves as cofactor.

The protein resides in the cytoplasm. It is found in the secreted. It localises to the cell surface. It carries out the reaction (2R)-2-phosphoglycerate = phosphoenolpyruvate + H2O. It functions in the pathway carbohydrate degradation; glycolysis; pyruvate from D-glyceraldehyde 3-phosphate: step 4/5. Its function is as follows. Catalyzes the reversible conversion of 2-phosphoglycerate (2-PG) into phosphoenolpyruvate (PEP). It is essential for the degradation of carbohydrates via glycolysis. The sequence is that of Enolase from Albidiferax ferrireducens (strain ATCC BAA-621 / DSM 15236 / T118) (Rhodoferax ferrireducens).